The primary structure comprises 953 residues: Homeobox protein LUMINIDEPENDENS (953 aa).

Residues 63–123 (KIGKRPRDLL…VTQKTRVRKQ (61 aa)) constitute a DNA-binding region (homeobox). The disordered stretch occupies residues 404–430 (EQPGQKAAGKSPQTVRIGTSGRSRPMS). Positions 414 to 425 (SPQTVRIGTSGR) are enriched in polar residues. 5 repeat units span residues 498–502 (QPVNG), 507–511 (QPVNG), 516–520 (QPVNG), 525–529 (QPVNG), and 534–538 (QPVNG). Residues 498–538 (QPVNGFSTIQPVNGPSAVQPVNGPLAVQPVNGPSALQPVNG) are 5 X 5 AA repeats of Q-P-V-N-G. 3 disordered regions span residues 606-668 (NSKE…EPQD), 733-763 (APNS…NPGM), and 861-953 (VGQM…KRWR). The span at 608 to 623 (KEADVQRNRNRRERET) shows a compositional bias: basic and acidic residues. Low complexity predominate over residues 651 to 661 (PEIPSQQPPEE). Polar residues predominate over residues 733–742 (APNSSSSSNK). Residues 869 to 884 (SSSWRSQQSQNSYYSH) are compositionally biased toward low complexity. Polar residues-rich tracts occupy residues 888 to 934 (EIAS…QQQA) and 942 to 953 (THPYWNQNKRWR).

As to quaternary structure, interacts with SUF4. In terms of tissue distribution, expressed in shoot apex, root apex, leaf primordia and floral buds.

It is found in the nucleus. Functionally, seems to play a role in the regulation of flowering time in the autonomous flowering pathway by repressing FLOWERING LOCUS C expression. This is Homeobox protein LUMINIDEPENDENS (LD) from Arabidopsis thaliana (Mouse-ear cress).